Here is a 466-residue protein sequence, read N- to C-terminus: 23S rRNA (uracil(1939)-C(5))-methyltransferase RlmD (466 aa).

The TRAM domain maps to 11-69 (KITDTKHKEIVINRLDHLGAGIGHLNNKSIFVDGLLPGEKALVQITDDKKQYARAKVIK). Residues cysteine 82, cysteine 88, cysteine 91, and cysteine 184 each contribute to the [4Fe-4S] cluster site. Residues glutamine 287, phenylalanine 316, asparagine 321, glutamate 337, asparagine 364, and aspartate 385 each coordinate S-adenosyl-L-methionine. The active-site Nucleophile is the cysteine 411.

This sequence belongs to the class I-like SAM-binding methyltransferase superfamily. RNA M5U methyltransferase family. RlmD subfamily.

It catalyses the reaction uridine(1939) in 23S rRNA + S-adenosyl-L-methionine = 5-methyluridine(1939) in 23S rRNA + S-adenosyl-L-homocysteine + H(+). In terms of biological role, catalyzes the formation of 5-methyl-uridine at position 1939 (m5U1939) in 23S rRNA. The protein is 23S rRNA (uracil(1939)-C(5))-methyltransferase RlmD of Photobacterium profundum (strain SS9).